Reading from the N-terminus, the 1598-residue chain is Transposon Ty2-LR2 Gag-Pol polyprotein (1598 aa).

3 stretches are compositionally biased toward polar residues: residues 1-11, 19-39, and 49-60; these read MESQQLHQNPH, ASVT…SASN, and KVNSQEETTPGT. 2 disordered regions span residues 1-88 and 359-449; these read MESQ…YQQH and QHSE…SNDE. The interval 295-397 is RNA-binding; that stretch reads ENNINVSDRL…SSKPRAAKAH (103 aa). Residues 369–381 are compositionally biased toward low complexity; sequence TSPNTTNTKVTTR. 2 stretches are compositionally biased toward polar residues: residues 399–408 and 415–435; these read IATSSKFSRV and ESTV…GQQQ. Asp-457 functions as the For protease activity; shared with dimeric partner in the catalytic mechanism. An integrase-type zinc finger-like region spans residues 579 to 636; sequence NVNKSKSVNKYPYPLIHRMLGHANFRSIQKSLKKNAVTYLKESDIEWSNASTYQCPDC. One can recognise an Integrase catalytic domain in the interval 656–831; it reads ESYEPFQYLH…AGLDITTILP (176 aa). 2 residues coordinate Mg(2+): Asp-667 and Asp-732. Polar residues-rich tracts occupy residues 915 to 927, 1009 to 1034, and 1065 to 1082; these read SFIE…QSYD, ESDT…STNE, and QRNS…STPS. Disordered stretches follow at residues 915-934, 1004-1034, 1059-1135, 1146-1165, and 1170-1205; these read SFIE…ESDH, MGGT…STNE, TEEP…KSSK, LPLP…VSKD, and HSRQ…TEIE. The segment covering 1151–1165 has biased composition (basic and acidic residues); sequence LTHKSPTDTSDVSKD. A Bipartite nuclear localization signal motif is present at residues 1193–1227; the sequence is KKRSLEDNETEIEVSRDTWNNKNMRSLEPPRSKKR. The 139-residue stretch at 1353 to 1491 folds into the Reverse transcriptase Ty1/copia-type domain; that stretch reads NDYYITQLDI…DILGLEIKYQ (139 aa). Mg(2+) contacts are provided by Asp-1361, Asp-1442, and Asp-1443.

As to quaternary structure, the capsid protein forms a homotrimer, from which the VLPs are assembled. The protease is a homodimer, whose active site consists of two apposed aspartic acid residues. Post-translationally, initially, virus-like particles (VLPs) are composed of the structural unprocessed proteins Gag and Gag-Pol, and also contain the host initiator methionine tRNA (tRNA(i)-Met) which serves as a primer for minus-strand DNA synthesis, and a dimer of genomic Ty RNA. Processing of the polyproteins occurs within the particle and proceeds by an ordered pathway, called maturation. First, the protease (PR) is released by autocatalytic cleavage of the Gag-Pol polyprotein, and this cleavage is a prerequisite for subsequent processing at the remaining sites to release the mature structural and catalytic proteins. Maturation takes place prior to the RT reaction and is required to produce transposition-competent VLPs.

It localises to the cytoplasm. Its subcellular location is the nucleus. The enzyme catalyses DNA(n) + a 2'-deoxyribonucleoside 5'-triphosphate = DNA(n+1) + diphosphate. The catalysed reaction is Endonucleolytic cleavage to 5'-phosphomonoester.. Capsid protein (CA) is the structural component of the virus-like particle (VLP), forming the shell that encapsulates the retrotransposons dimeric RNA genome. The particles are assembled from trimer-clustered units and there are holes in the capsid shells that allow for the diffusion of macromolecules. CA also has nucleocapsid-like chaperone activity, promoting primer tRNA(i)-Met annealing to the multipartite primer-binding site (PBS), dimerization of Ty2 RNA and initiation of reverse transcription. Functionally, the aspartyl protease (PR) mediates the proteolytic cleavages of the Gag and Gag-Pol polyproteins after assembly of the VLP. In terms of biological role, reverse transcriptase/ribonuclease H (RT) is a multifunctional enzyme that catalyzes the conversion of the retro-elements RNA genome into dsDNA within the VLP. The enzyme displays a DNA polymerase activity that can copy either DNA or RNA templates, and a ribonuclease H (RNase H) activity that cleaves the RNA strand of RNA-DNA heteroduplexes during plus-strand synthesis and hydrolyzes RNA primers. The conversion leads to a linear dsDNA copy of the retrotransposon that includes long terminal repeats (LTRs) at both ends. Its function is as follows. Integrase (IN) targets the VLP to the nucleus, where a subparticle preintegration complex (PIC) containing at least integrase and the newly synthesized dsDNA copy of the retrotransposon must transit the nuclear membrane. Once in the nucleus, integrase performs the integration of the dsDNA into the host genome. The chain is Transposon Ty2-LR2 Gag-Pol polyprotein (TY2B-LR2) from Saccharomyces cerevisiae (strain ATCC 204508 / S288c) (Baker's yeast).